The chain runs to 143 residues: Transcriptional regulator SlyA (143 aa).

Residues 2–135 (ESTLGSDLAR…LANLIERLEQ (134 aa)) enclose the HTH marR-type domain. A DNA-binding region (H-T-H motif) is located at residues 49–72 (QIQLAKAIGIEQPSLVRTLDQLED).

Belongs to the SlyA family. As to quaternary structure, homodimer.

Functionally, transcription regulator that can specifically activate or repress expression of target genes. This chain is Transcriptional regulator SlyA, found in Edwardsiella ictaluri (strain 93-146).